The primary structure comprises 356 residues: Isopentenyl-diphosphate delta-isomerase (356 aa).

Substrate is bound at residue 8–9 (RK). FMN is bound by residues 66–68 (AIT), Ser96, and Asn124. 96–98 (SQR) is a binding site for substrate. Gln160 provides a ligand contact to substrate. Mg(2+) is bound at residue Glu161. Residues Lys201, Thr231, 280 to 282 (GIR), and 301 to 302 (AL) contribute to the FMN site.

This sequence belongs to the IPP isomerase type 2 family. In terms of assembly, homooctamer. Dimer of tetramers. Requires FMN as cofactor. NADPH serves as cofactor. Mg(2+) is required as a cofactor.

It is found in the cytoplasm. It catalyses the reaction isopentenyl diphosphate = dimethylallyl diphosphate. Its function is as follows. Involved in the biosynthesis of isoprenoids. Catalyzes the 1,3-allylic rearrangement of the homoallylic substrate isopentenyl (IPP) to its allylic isomer, dimethylallyl diphosphate (DMAPP). In Methanococcus aeolicus (strain ATCC BAA-1280 / DSM 17508 / OCM 812 / Nankai-3), this protein is Isopentenyl-diphosphate delta-isomerase.